The chain runs to 458 residues: Bifunctional protein GlmU (458 aa).

The interval 1 to 230 (MLQIDVVILA…DWEVVGVNDK (230 aa)) is pyrophosphorylase. UDP-N-acetyl-alpha-D-glucosamine is bound by residues 9-12 (LAAG), lysine 23, glutamine 75, and 80-81 (GT). Residue aspartate 104 coordinates Mg(2+). UDP-N-acetyl-alpha-D-glucosamine contacts are provided by glycine 139, glutamate 155, asparagine 170, and asparagine 228. Asparagine 228 is a binding site for Mg(2+). Residues 231–251 (IQLSTLERAHQQDVAKGLMEQ) form a linker region. An N-acetyltransferase region spans residues 252–458 (GVMFADPARF…NWKRPKKNKD (207 aa)). Residues arginine 334 and lysine 352 each coordinate UDP-N-acetyl-alpha-D-glucosamine. Histidine 364 functions as the Proton acceptor in the catalytic mechanism. UDP-N-acetyl-alpha-D-glucosamine-binding residues include tyrosine 367 and asparagine 378. Acetyl-CoA-binding positions include alanine 381, 387 to 388 (NY), serine 406, alanine 424, and arginine 441.

It in the N-terminal section; belongs to the N-acetylglucosamine-1-phosphate uridyltransferase family. In the C-terminal section; belongs to the transferase hexapeptide repeat family. Homotrimer. The cofactor is Mg(2+).

It localises to the cytoplasm. It carries out the reaction alpha-D-glucosamine 1-phosphate + acetyl-CoA = N-acetyl-alpha-D-glucosamine 1-phosphate + CoA + H(+). It catalyses the reaction N-acetyl-alpha-D-glucosamine 1-phosphate + UTP + H(+) = UDP-N-acetyl-alpha-D-glucosamine + diphosphate. It participates in nucleotide-sugar biosynthesis; UDP-N-acetyl-alpha-D-glucosamine biosynthesis; N-acetyl-alpha-D-glucosamine 1-phosphate from alpha-D-glucosamine 6-phosphate (route II): step 2/2. It functions in the pathway nucleotide-sugar biosynthesis; UDP-N-acetyl-alpha-D-glucosamine biosynthesis; UDP-N-acetyl-alpha-D-glucosamine from N-acetyl-alpha-D-glucosamine 1-phosphate: step 1/1. Its pathway is bacterial outer membrane biogenesis; LPS lipid A biosynthesis. Catalyzes the last two sequential reactions in the de novo biosynthetic pathway for UDP-N-acetylglucosamine (UDP-GlcNAc). The C-terminal domain catalyzes the transfer of acetyl group from acetyl coenzyme A to glucosamine-1-phosphate (GlcN-1-P) to produce N-acetylglucosamine-1-phosphate (GlcNAc-1-P), which is converted into UDP-GlcNAc by the transfer of uridine 5-monophosphate (from uridine 5-triphosphate), a reaction catalyzed by the N-terminal domain. This Nitrosomonas eutropha (strain DSM 101675 / C91 / Nm57) protein is Bifunctional protein GlmU.